A 397-amino-acid chain; its full sequence is ATP-dependent RNA helicase eIF4A (397 aa).

The Q motif motif lies at 24-52; it reads DSFDDMNLKSELLRGIYAYGFERPSAIQQ. The Helicase ATP-binding domain occupies 55–225; that stretch reads IMPVIKGHDV…TKFMRDPVRI (171 aa). 68-75 lines the ATP pocket; sequence AQSGTGKT. Positions 173–176 match the DEAD box motif; it reads DEAD. The region spanning 236-397 is the Helicase C-terminal domain; that stretch reads GIKQFYIAVE…EMPMNVADLI (162 aa).

It belongs to the DEAD box helicase family. eIF4A subfamily. In terms of assembly, component of the eIF4F complex, which composition varies with external and internal environmental conditions. It is composed of at least eIF4A, eIF4E and eIF4G.

Its subcellular location is the cytoplasm. The enzyme catalyses ATP + H2O = ADP + phosphate + H(+). ATP-dependent RNA helicase which is a subunit of the eIF4F complex involved in cap recognition and is required for mRNA binding to ribosome. In the current model of translation initiation, eIF4A unwinds RNA secondary structures in the 5'-UTR of mRNAs which is necessary to allow efficient binding of the small ribosomal subunit, and subsequent scanning for the initiator codon. This is ATP-dependent RNA helicase eIF4A (TIF1) from Chaetomium globosum (strain ATCC 6205 / CBS 148.51 / DSM 1962 / NBRC 6347 / NRRL 1970) (Soil fungus).